A 278-amino-acid polypeptide reads, in one-letter code: Achaete-scute homolog 5 (278 aa).

Residues 1-66 (MPMGAAERGA…GPFGGGLALG (66 aa)) form a disordered region. The bHLH domain occupies 155–207 (AFIQKRNERERQRVKCVNEGYARLRGHLPGALAEKRLSKVETLRAAIRYIKYL). The tract at residues 214–278 (APDGSTPPAS…PFLESEESWH (65 aa)) is disordered. The span at 230–239 (GPCPAPPATP) shows a compositional bias: pro residues. Over residues 240–249 (RPDRPGDGEA) the composition is skewed to basic and acidic residues. Residues 252 to 271 (PSSLVPESSESSCFSPSPFL) show a composition bias toward low complexity.

As to quaternary structure, interacts with transcription factor TCF3/E12.

It localises to the nucleus. Transcription factor. Probably binds E-box motifs 5'-CANNTG-3' in complex with transcription factor TCF3/E12. Negatively modulates transcription of target genes such as CDH1/E-cadherin, perhaps by recruiting the PRC2 repressive complex to regulatory elements. Regulates ameloblast development and tooth germ growth, perhaps acting by positively modulating migration of inner enamel epithelium (IEE) cells. Plays a role in enamel formation. The polypeptide is Achaete-scute homolog 5 (ASCL5) (Homo sapiens (Human)).